We begin with the raw amino-acid sequence, 40 residues long: Ostricacin-3 (40 aa).

3 disulfides stabilise this stretch: C8-C36, C15-C30, and C20-C37.

It is found in the secreted. Has antibacterial activity against the Gram-positive bacterium S.aureus 1056 MRSA (MIC=2.78 ug/ml) and the Gram-negative bacterium E.coli O157:H7 (MIC=2.41 ug/ml). Does not have antifungal activity against the yeast C.albicans 3153A. The polypeptide is Ostricacin-3 (Struthio camelus (Common ostrich)).